Here is a 253-residue protein sequence, read N- to C-terminus: Testis-expressed protein 47 (253 aa).

This is Testis-expressed protein 47 from Rattus norvegicus (Rat).